The chain runs to 344 residues: Succinylglutamate desuccinylase (344 aa).

Zn(2+) is bound by residues His-63, Glu-66, and His-160. Glu-224 is an active-site residue.

This sequence belongs to the AspA/AstE family. Succinylglutamate desuccinylase subfamily. Zn(2+) serves as cofactor.

The enzyme catalyses N-succinyl-L-glutamate + H2O = L-glutamate + succinate. It functions in the pathway amino-acid degradation; L-arginine degradation via AST pathway; L-glutamate and succinate from L-arginine: step 5/5. Transforms N(2)-succinylglutamate into succinate and glutamate. This chain is Succinylglutamate desuccinylase, found in Shewanella sp. (strain MR-7).